We begin with the raw amino-acid sequence, 681 residues long: Protein asunder (681 aa).

The interval 574 to 619 is disordered; the sequence is PGASHLRSYTESPLSPERLEPTSSASNSSSSILKASKRRMSSSGQR. The short motif at 606 to 612 is the Nuclear localization signal (NLS) element; that stretch reads LKASKRR.

The protein belongs to the Integrator subunit 13 family. As to quaternary structure, belongs to the multiprotein complex Integrator, at least composed of IntS1, IntS2, IntS3, IntS4, omd/IntS5, IntS6, defl/IntS7, IntS8, IntS9, IntS10, IntS11, IntS12, asun/IntS13, IntS14 and IntS15. The core complex associates with protein phosphatase 2A subunits mts/PP2A and Pp2A-29B, to form the Integrator-PP2A (INTAC) complex. Phosphorylated.

The protein resides in the nucleus. It localises to the cytoplasm. The protein localises to the perinuclear region. Its function is as follows. Component of the integrator complex, a multiprotein complex that terminates RNA polymerase II (Pol II) transcription in the promoter-proximal region of genes. The integrator complex provides a quality checkpoint during transcription elongation by driving premature transcription termination of transcripts that are unfavorably configured for transcriptional elongation: the complex terminates transcription by (1) catalyzing dephosphorylation of the C-terminal domain (CTD) of Pol II subunit Polr2A/Rbp1 and Spt5, and (2) degrading the exiting nascent RNA transcript via endonuclease activity. The integrator complex is also involved in the 3'-end processing of the U7 snRNA, and also the spliceosomal snRNAs U1, U2, U4 and U5. The chain is Protein asunder (asun) from Drosophila virilis (Fruit fly).